Here is a 466-residue protein sequence, read N- to C-terminus: uncharacterized protein (466 aa).

Residues 1-22 form a disordered region; the sequence is MKKNNERVNTNPSLISKSYNMK. Residues 7–19 are compositionally biased toward polar residues; sequence RVNTNPSLISKSY. Ser40 and Ser42 each carry phosphoserine. Positions 108 to 183 constitute an RRM domain; that stretch reads YFVHMDNISP…RLISATITNH (76 aa). Residues 186–207 are disordered; sequence RLPNAEHLESSTKTKDESQDKD. Residues 188–207 are compositionally biased toward basic and acidic residues; that stretch reads PNAEHLESSTKTKDESQDKD. One can recognise a CID domain in the interval 209-368; it reads LTKLDRAKLE…RAWRNFSGNT (160 aa). Position 371 is a phosphoserine (Ser371). Over residues 425-436 the composition is skewed to low complexity; that stretch reads STETSSSSSPQP. Residues 425–448 form a disordered region; it reads STETSSSSSPQPTEERKAKFKPSF.

It is found in the nucleus. The protein resides in the cytoplasm. This is an uncharacterized protein from Schizosaccharomyces pombe (strain 972 / ATCC 24843) (Fission yeast).